The sequence spans 725 residues: Endoglucanase G (725 aa).

Positions 1–35 are cleaved as a signal peptide; sequence MLKTKRKLTKAIGVALSISILSSLVSFIPQTNTYA. Catalysis depends on D93, which acts as the Nucleophile. Catalysis depends on residues H408, D446, and E455. A CBM3 domain is found at 489–650; it reads ITNDEVIIKA…GVKVFGNEPA (162 aa). The region spanning 658 to 724 is the Dockerin domain; sequence PEILYGDVNS…LLGTITQLPQ (67 aa).

This sequence belongs to the glycosyl hydrolase 9 (cellulase E) family.

It carries out the reaction Endohydrolysis of (1-&gt;4)-beta-D-glucosidic linkages in cellulose, lichenin and cereal beta-D-glucans.. The protein operates within glycan metabolism; cellulose degradation. In terms of biological role, the biological conversion of cellulose to glucose generally requires three types of hydrolytic enzymes: (1) Endoglucanases which cut internal beta-1,4-glucosidic bonds; (2) Exocellobiohydrolases that cut the disaccharide cellobiose from the non-reducing end of the cellulose polymer chain; (3) Beta-1,4-glucosidases which hydrolyze the cellobiose and other short cello-oligosaccharides to glucose. The chain is Endoglucanase G (celCCG) from Ruminiclostridium cellulolyticum (strain ATCC 35319 / DSM 5812 / JCM 6584 / H10) (Clostridium cellulolyticum).